Reading from the N-terminus, the 716-residue chain is 1,4-alpha-glucan branching enzyme GlgB (716 aa).

The active-site Nucleophile is aspartate 398. Catalysis depends on glutamate 451, which acts as the Proton donor.

The protein belongs to the glycosyl hydrolase 13 family. GlgB subfamily. In terms of assembly, monomer.

It carries out the reaction Transfers a segment of a (1-&gt;4)-alpha-D-glucan chain to a primary hydroxy group in a similar glucan chain.. The protein operates within glycan biosynthesis; glycogen biosynthesis. Its function is as follows. Catalyzes the formation of the alpha-1,6-glucosidic linkages in glycogen by scission of a 1,4-alpha-linked oligosaccharide from growing alpha-1,4-glucan chains and the subsequent attachment of the oligosaccharide to the alpha-1,6 position. In Nitrobacter hamburgensis (strain DSM 10229 / NCIMB 13809 / X14), this protein is 1,4-alpha-glucan branching enzyme GlgB.